Consider the following 409-residue polypeptide: Peptidase T (409 aa).

Histidine 80 is a Zn(2+) binding site. Aspartate 82 is a catalytic residue. Residue aspartate 143 coordinates Zn(2+). Catalysis depends on glutamate 177, which acts as the Proton acceptor. Glutamate 178, aspartate 200, and histidine 382 together coordinate Zn(2+).

It belongs to the peptidase M20B family. The cofactor is Zn(2+).

The protein resides in the cytoplasm. It carries out the reaction Release of the N-terminal residue from a tripeptide.. In terms of biological role, cleaves the N-terminal amino acid of tripeptides. This chain is Peptidase T, found in Enterococcus faecalis (strain ATCC 700802 / V583).